Consider the following 702-residue polypeptide: MNSLFASTARGLEELLKTELENLGAVECQVVQGGVHFKGDTRLVYQSLMWSRLASRIMLPLGECKVYSDLDLYLGVQAINWTEMFNPGATFAVHFSGLNDTIRNSQYGAMKVKDAIVDAFTRKNLPRPNVDRDAPDIRVNVWLHKETASIALDLSGDGLHLRGYRDRAGIAPIKETLAAAIVMRSGWQPGTPLLDPMCGSGTLLIEAAMLATDRAPGLHRGRWGFSGWAQHDEAIWQEVKAEAQTRARKGLAEYSSHFYGSDSDARVIQRARTNARLAGIGELITFEVKDVAQLTNPLPKGPYGTVLSNPPYGERLDSEPALIALHSLLGRIMKNQFGGWNLSLFSASPDLLSCLQLRADKQYKAKNGPLDCVQKNYHVAESTPDSKPAMVAEDYTNRLRKNLKKFEKWARQEGIECYRLYDADLPEYNVAVDRYADWVVVQEYAPPKTIDAHKARQRLFDIIAATISVLGIAPNKLVLKTRERQKGKNQYQKLGEKGEFLEVTEYNAHLWVNLTDYLDTGLFLDHRIARRMLGQMSKGKDFLNLFSYTGSATVHAGLGGARSTTTVDMSRTYLEWAERNLRLNGLTGRAHRLIQADCLAWLREANEQFDLIFIDPPTFSNSKRMEDAFDVQRDHLALMKDLKRLLRAGGTIMFSNNKRGFRMDLDGLAKLGLKAQEITQKTLSQDFARNRQIHNCWLITAA.

One can recognise a THUMP domain in the interval 43–154; the sequence is LVYQSLMWSR…KETASIALDL (112 aa).

Belongs to the methyltransferase superfamily. RlmKL family.

It is found in the cytoplasm. The enzyme catalyses guanosine(2445) in 23S rRNA + S-adenosyl-L-methionine = N(2)-methylguanosine(2445) in 23S rRNA + S-adenosyl-L-homocysteine + H(+). It carries out the reaction guanosine(2069) in 23S rRNA + S-adenosyl-L-methionine = N(2)-methylguanosine(2069) in 23S rRNA + S-adenosyl-L-homocysteine + H(+). Specifically methylates the guanine in position 2445 (m2G2445) and the guanine in position 2069 (m7G2069) of 23S rRNA. This chain is Ribosomal RNA large subunit methyltransferase K/L, found in Escherichia coli (strain K12 / DH10B).